The following is a 336-amino-acid chain: NADH-quinone oxidoreductase subunit H (336 aa).

A run of 8 helical transmembrane segments spans residues 4 to 24 (YILW…LVVA), 75 to 95 (YLFF…WAVI), 108 to 128 (LGLL…VIAG), 154 to 174 (MGFA…TGII), 181 to 201 (IWHW…IAGI), 233 to 253 (LFFL…SIMF), 272 to 292 (FVPG…MFLW), and 308 to 328 (LGWK…ACMV).

This sequence belongs to the complex I subunit 1 family. In terms of assembly, NDH-1 is composed of 14 different subunits. Subunits NuoA, H, J, K, L, M, N constitute the membrane sector of the complex.

It localises to the cell inner membrane. The catalysed reaction is a quinone + NADH + 5 H(+)(in) = a quinol + NAD(+) + 4 H(+)(out). NDH-1 shuttles electrons from NADH, via FMN and iron-sulfur (Fe-S) centers, to quinones in the respiratory chain. The immediate electron acceptor for the enzyme in this species is believed to be ubiquinone. Couples the redox reaction to proton translocation (for every two electrons transferred, four hydrogen ions are translocated across the cytoplasmic membrane), and thus conserves the redox energy in a proton gradient. This subunit may bind ubiquinone. The chain is NADH-quinone oxidoreductase subunit H from Francisella tularensis subsp. tularensis (strain FSC 198).